The sequence spans 622 residues: Leucine-rich repeat-containing protein 70 (622 aa).

A signal peptide spans 1 to 31; it reads MCGLQFSLPCLRLFLVVTCYLLLLLHKEILG. The 29-residue stretch at 32-60 folds into the LRRNT domain; that stretch reads CSSVCQLCTGRQINCRNLGLSSIPKNFPE. 12 LRR repeats span residues 61–82, 85–106, 109–130, 133–154, 157–178, 181–202, 205–226, 229–250, 253–274, 277–298, 301–322, and 326–347; these read STVF…ELTG, SLVA…AFVQ, HLYF…IFKG, NLRN…VFND, SVQY…TFVG, ALRI…GFQH, NLAC…AFEV, SLRR…AFKG, NLEY…GFSG, NLKH…TFSL, NLIY…TFEN, and SLKI…VLKP. Asn-215 carries N-linked (GlcNAc...) asparagine glycosylation. N-linked (GlcNAc...) asparagine glycosylation is present at Asn-266. Asn-331 and Asn-400 each carry an N-linked (GlcNAc...) asparagine glycan. An LRRCT domain is found at 359–406; sequence NPWECNCKLLGLRDWLASSAITLNIYCQNPPSMRGRALRYINITNCVT. The helical transmembrane segment at 527–547 threads the bilayer; that stretch reads AFDILLAFFILACVLIIFLIY.

As to expression, expressed at low levels in many tissues, including smooth muscle, brain, uterus, pancreas, cartilage, adipose, spleen and testis.

The protein localises to the membrane. Renders cells highly sensitive to the activation by cytokines and lipopolysaccharide (LPS). The sequence is that of Leucine-rich repeat-containing protein 70 (LRRC70) from Homo sapiens (Human).